A 600-amino-acid polypeptide reads, in one-letter code: Elongation factor 4 (600 aa).

Residues D13–R194 form the tr-type G domain. GTP is bound by residues D25–T30 and N141–D144.

It belongs to the TRAFAC class translation factor GTPase superfamily. Classic translation factor GTPase family. LepA subfamily.

The protein localises to the cell membrane. It catalyses the reaction GTP + H2O = GDP + phosphate + H(+). Functionally, required for accurate and efficient protein synthesis under certain stress conditions. May act as a fidelity factor of the translation reaction, by catalyzing a one-codon backward translocation of tRNAs on improperly translocated ribosomes. Back-translocation proceeds from a post-translocation (POST) complex to a pre-translocation (PRE) complex, thus giving elongation factor G a second chance to translocate the tRNAs correctly. Binds to ribosomes in a GTP-dependent manner. This is Elongation factor 4 from Rubrobacter xylanophilus (strain DSM 9941 / JCM 11954 / NBRC 16129 / PRD-1).